The following is a 463-amino-acid chain: Asparagine--tRNA ligase (463 aa).

The protein belongs to the class-II aminoacyl-tRNA synthetase family. Homodimer.

It localises to the cytoplasm. The catalysed reaction is tRNA(Asn) + L-asparagine + ATP = L-asparaginyl-tRNA(Asn) + AMP + diphosphate + H(+). In Alkaliphilus metalliredigens (strain QYMF), this protein is Asparagine--tRNA ligase.